A 362-amino-acid chain; its full sequence is DNA replication and repair protein RecF (362 aa).

30–37 (GLNAQGKS) is an ATP binding site.

The protein belongs to the RecF family.

It is found in the cytoplasm. Functionally, the RecF protein is involved in DNA metabolism; it is required for DNA replication and normal SOS inducibility. RecF binds preferentially to single-stranded, linear DNA. It also seems to bind ATP. This chain is DNA replication and repair protein RecF, found in Thermoanaerobacter sp. (strain X514).